Reading from the N-terminus, the 338-residue chain is Glyceraldehyde-3-phosphate dehydrogenase, cytosolic (338 aa).

NAD(+) contacts are provided by residues Arg13 to Ile14, Asp35, and Arg82. D-glyceraldehyde 3-phosphate is bound by residues Ser153–Thr155, Thr184, Thr213–Gly214, and Arg236. Catalysis depends on Cys154, which acts as the Nucleophile. Asn318 lines the NAD(+) pocket.

The protein belongs to the glyceraldehyde-3-phosphate dehydrogenase family. As to quaternary structure, homotetramer.

The protein resides in the cytoplasm. The enzyme catalyses D-glyceraldehyde 3-phosphate + phosphate + NAD(+) = (2R)-3-phospho-glyceroyl phosphate + NADH + H(+). Its pathway is carbohydrate degradation; glycolysis; pyruvate from D-glyceraldehyde 3-phosphate: step 1/5. Functionally, key enzyme in glycolysis that catalyzes the first step of the pathway by converting D-glyceraldehyde 3-phosphate (G3P) into 3-phospho-D-glyceroyl phosphate. Essential for the maintenance of cellular ATP levels and carbohydrate metabolism. The protein is Glyceraldehyde-3-phosphate dehydrogenase, cytosolic (GAPC) of Dianthus caryophyllus (Carnation).